The following is a 155-amino-acid chain: Protein-export protein SecB (155 aa).

This sequence belongs to the SecB family. Homotetramer, a dimer of dimers. One homotetramer interacts with 1 SecA dimer.

The protein localises to the cytoplasm. One of the proteins required for the normal export of preproteins out of the cell cytoplasm. It is a molecular chaperone that binds to a subset of precursor proteins, maintaining them in a translocation-competent state. It also specifically binds to its receptor SecA. The sequence is that of Protein-export protein SecB from Escherichia coli O127:H6 (strain E2348/69 / EPEC).